Here is a 1041-residue protein sequence, read N- to C-terminus: Sodium/potassium-transporting ATPase subunit alpha (1041 aa).

A run of 4 helical transmembrane segments spans residues 115–135, 147–167, 312–332, and 338–358; these read FGGFAMLLWIGAILCFVAYSI, NLYLGIVLSAVVIVTGIFSYY, LITGVAVFLGVTFFVIAFILG, and AVIFLIGIIVANVPEGLLATV. Asp394 functions as the 4-aspartylphosphate intermediate in the catalytic mechanism. Lys526 contacts ATP. A run of 4 helical transmembrane segments spans residues 808 to 828, 870 to 890, 935 to 955, and 970 to 990; these read FLAFILCDIPLPLGTVTILCI, MAYGQIGMIQAAAGFFVYFVI, TCHTAFFISIVVVQWADLIIC, and WALNFGLVFETVLAAFLSYCP.

This sequence belongs to the cation transport ATPase (P-type) (TC 3.A.3) family. Type IIC subfamily. The sodium/potassium-transporting ATPase is composed of a catalytic alpha subunit, an auxiliary non-catalytic beta subunit and an additional regulatory subunit. High levels are found in some adult tissues: Malpighian tubules, indirect flight muscles, tubular leg muscles and throughout the nervous system (brain, optic lobes, retina and ventral thoracic neuromere). Lower levels are detected at the posterior end where the reproductive organs and rectum are located.

It localises to the cell membrane. It carries out the reaction K(+)(out) + Na(+)(in) + ATP + H2O = K(+)(in) + Na(+)(out) + ADP + phosphate + H(+). This is the catalytic component of the active enzyme, which catalyzes the hydrolysis of ATP coupled with the exchange of sodium and potassium ions across the plasma membrane. This action creates the electrochemical gradient of sodium and potassium ions, providing the energy for active transport of various nutrients. The sequence is that of Sodium/potassium-transporting ATPase subunit alpha (Atpalpha) from Drosophila melanogaster (Fruit fly).